A 25-amino-acid chain; its full sequence is Small ribosomal subunit protein eS32 eS32z/eS32y/eS32x/eS32w/eS32v (25 aa).

Positions 1–25 (MRAKWKKKRMRRLKRKRRKMRQRSK) are disordered.

Belongs to the eukaryotic ribosomal protein eS32 family. As to quaternary structure, component of the small ribosomal subunit (SSU).

The protein is Small ribosomal subunit protein eS32 eS32z/eS32y/eS32x/eS32w/eS32v (RPL41A) of Arabidopsis thaliana (Mouse-ear cress).